Reading from the N-terminus, the 134-residue chain is Large ribosomal subunit protein uL18 (134 aa).

Residues Met-1 to Arg-25 form a disordered region. Basic and acidic residues predominate over residues Asn-7 to Thr-19.

This sequence belongs to the universal ribosomal protein uL18 family. In terms of assembly, part of the 50S ribosomal subunit; part of the 5S rRNA/L5/L18/L25 subcomplex. Contacts the 5S and 23S rRNAs.

This is one of the proteins that bind and probably mediate the attachment of the 5S RNA into the large ribosomal subunit, where it forms part of the central protuberance. The chain is Large ribosomal subunit protein uL18 from Corynebacterium jeikeium (strain K411).